The sequence spans 320 residues: Thymidine kinase (320 aa).

10 to 17 (GAYDTGKS) serves as a coordination point for ATP. Catalysis depends on Glu33, which acts as the Proton acceptor. Positions 51 and 75 each coordinate substrate. Arg162 serves as a coordination point for ATP. Arg168 lines the substrate pocket.

Belongs to the herpesviridae thymidine kinase family. Homodimer.

The enzyme catalyses thymidine + ATP = dTMP + ADP + H(+). Catalyzes the transfer of the gamma-phospho group of ATP to thymidine to generate dTMP in the salvage pathway of pyrimidine synthesis. The dTMP serves as a substrate for DNA polymerase during viral DNA replication. Allows the virus to be reactivated and to grow in non-proliferative cells lacking a high concentration of phosphorylated nucleic acid precursors. In Suid herpesvirus 1 (strain NIA-3) (SuHV-1), this protein is Thymidine kinase.